The sequence spans 708 residues: ATP-dependent DNA helicase Hel308 (708 aa).

Residues Gln-28 and Thr-46–Ser-53 contribute to the ATP site. A Helicase ATP-binding domain is found at Arg-33–Ser-198. The short motif at Asp-143–His-146 is the DEAH box element. Residues Glu-231 to Gly-429 form the Helicase C-terminal domain.

This sequence belongs to the helicase family. Hel308 subfamily. In terms of assembly, monomer.

The enzyme catalyses Couples ATP hydrolysis with the unwinding of duplex DNA by translocating in the 3'-5' direction.. The catalysed reaction is ATP + H2O = ADP + phosphate + H(+). In terms of biological role, DNA-dependent ATPase and 3'-5' DNA helicase that may be involved in repair of stalled replication forks. The protein is ATP-dependent DNA helicase Hel308 of Pyrobaculum calidifontis (strain DSM 21063 / JCM 11548 / VA1).